Consider the following 254-residue polypeptide: Probable transcriptional regulatory protein HDEF_0869 (254 aa).

The interval 1–20 is disordered; the sequence is MAGHSKWANTKHRKAAQDAK.

Belongs to the TACO1 family.

It localises to the cytoplasm. The protein is Probable transcriptional regulatory protein HDEF_0869 of Hamiltonella defensa subsp. Acyrthosiphon pisum (strain 5AT).